The chain runs to 802 residues: Copper-exporting P-type ATPase (802 aa).

HMA domains lie at 5-71 (KEIA…YHVV) and 73-139 (EKAE…YKLK). Residues Cys-16, Cys-19, Cys-84, and Cys-87 each contribute to the Cu(+) site. The next 6 helical transmembrane spans lie at 162 to 181 (LIFS…SHFT), 196 to 218 (WMQF…VGAY), 230 to 249 (VLVA…LTFQ), 259 to 278 (GLYY…GKLF), 412 to 434 (ISGI…WYLW), and 447 to 469 (FIAV…SIMA). Residue Asp-499 is the 4-aspartylphosphate intermediate of the active site. Mg(2+) is bound by residues Asp-698 and Asp-702. The next 2 helical transmembrane spans lie at 756-775 (LFWA…LGFL) and 779-796 (IAGA…LNAL).

It belongs to the cation transport ATPase (P-type) (TC 3.A.3) family. Type IB subfamily. Monomer at sub-stoichiometric copper concentrations. Homodimer at higher copper concentrations. Forms a heterodimer (electrostatic interactions) with CopZ during the transfer of Cu(+).

It localises to the cell membrane. It carries out the reaction Cu(+)(in) + ATP + H2O = Cu(+)(out) + ADP + phosphate + H(+). In terms of biological role, involved in copper export. The chain is Copper-exporting P-type ATPase (copA) from Bacillus subtilis (strain 168).